The following is a 607-amino-acid chain: Elongation factor 4 (607 aa).

Residues 11-193 (SKIRNFSIIA…QIVEKVPAPA (183 aa)) form the tr-type G domain. GTP-binding positions include 23-28 (DHGKST) and 140-143 (NKID).

Belongs to the TRAFAC class translation factor GTPase superfamily. Classic translation factor GTPase family. LepA subfamily.

It is found in the cell membrane. It catalyses the reaction GTP + H2O = GDP + phosphate + H(+). Required for accurate and efficient protein synthesis under certain stress conditions. May act as a fidelity factor of the translation reaction, by catalyzing a one-codon backward translocation of tRNAs on improperly translocated ribosomes. Back-translocation proceeds from a post-translocation (POST) complex to a pre-translocation (PRE) complex, thus giving elongation factor G a second chance to translocate the tRNAs correctly. Binds to ribosomes in a GTP-dependent manner. This is Elongation factor 4 from Bacillus cereus (strain ATCC 14579 / DSM 31 / CCUG 7414 / JCM 2152 / NBRC 15305 / NCIMB 9373 / NCTC 2599 / NRRL B-3711).